Reading from the N-terminus, the 476-residue chain is Replication factor C large subunit (476 aa).

Position 43-50 (43-50 (GKPGIGKT)) interacts with ATP. The segment at 435-476 (LEALRMQEPPVPETPPAAEEQPLEEPQEEKKLAPKQATLDFF) is disordered.

Belongs to the activator 1 small subunits family. RfcL subfamily. In terms of assembly, heteromultimer composed of small subunits (RfcS) and large subunits (RfcL).

Its function is as follows. Part of the RFC clamp loader complex which loads the PCNA sliding clamp onto DNA. In Methanocorpusculum labreanum (strain ATCC 43576 / DSM 4855 / Z), this protein is Replication factor C large subunit.